The sequence spans 210 residues: Na(+)-translocating NADH-quinone reductase subunit D (210 aa).

5 consecutive transmembrane segments (helical) span residues Phe42 to Ile62, Ile72 to Ala92, Val103 to Met123, Leu131 to Phe151, and Asn178 to Ile198.

The protein belongs to the NqrDE/RnfAE family. Composed of six subunits; NqrA, NqrB, NqrC, NqrD, NqrE and NqrF.

It is found in the cell inner membrane. It catalyses the reaction a ubiquinone + n Na(+)(in) + NADH + H(+) = a ubiquinol + n Na(+)(out) + NAD(+). Its function is as follows. NQR complex catalyzes the reduction of ubiquinone-1 to ubiquinol by two successive reactions, coupled with the transport of Na(+) ions from the cytoplasm to the periplasm. NqrA to NqrE are probably involved in the second step, the conversion of ubisemiquinone to ubiquinol. The protein is Na(+)-translocating NADH-quinone reductase subunit D of Vibrio vulnificus (strain YJ016).